A 65-amino-acid chain; its full sequence is MSKKAPAQKEKKLPRAATWYELDLEKGVFRFKNKLCPKCGSVMAFHKEPVPRWHCGKCGYTQFQR.

4 residues coordinate Zn(2+): cysteine 36, cysteine 39, cysteine 55, and cysteine 58. Residues 36–58 form a C4-type zinc finger; that stretch reads CPKCGSVMAFHKEPVPRWHCGKC.

Belongs to the eukaryotic ribosomal protein eS31 family. As to quaternary structure, part of the 30S ribosomal subunit. Zn(2+) is required as a cofactor.

This Pyrobaculum aerophilum (strain ATCC 51768 / DSM 7523 / JCM 9630 / CIP 104966 / NBRC 100827 / IM2) protein is Small ribosomal subunit protein eS31.